The primary structure comprises 521 residues: Type-2 serine--tRNA ligase (521 aa).

Position 316 (Ala-316) interacts with L-serine. A Zn(2+)-binding site is contributed by Cys-318. Arg-347 provides a ligand contact to L-serine. Residues 347-349 and 358-359 each bind ATP; these read RWE and RV. 364-366 provides a ligand contact to L-serine; that stretch reads RVE. Residues Glu-366 and Cys-473 each coordinate Zn(2+). Arg-480 contributes to the ATP binding site.

The protein belongs to the class-II aminoacyl-tRNA synthetase family. Type-2 seryl-tRNA synthetase subfamily. In terms of assembly, homodimer. It depends on Zn(2+) as a cofactor.

It localises to the cytoplasm. It carries out the reaction tRNA(Ser) + L-serine + ATP = L-seryl-tRNA(Ser) + AMP + diphosphate + H(+). The enzyme catalyses tRNA(Sec) + L-serine + ATP = L-seryl-tRNA(Sec) + AMP + diphosphate + H(+). The protein operates within aminoacyl-tRNA biosynthesis; selenocysteinyl-tRNA(Sec) biosynthesis; L-seryl-tRNA(Sec) from L-serine and tRNA(Sec): step 1/1. Its function is as follows. Catalyzes the attachment of serine to tRNA(Ser). Is also able to aminoacylate tRNA(Sec) with serine, to form the misacylated tRNA L-seryl-tRNA(Sec), which will be further converted into selenocysteinyl-tRNA(Sec). In Methanocaldococcus jannaschii (strain ATCC 43067 / DSM 2661 / JAL-1 / JCM 10045 / NBRC 100440) (Methanococcus jannaschii), this protein is Type-2 serine--tRNA ligase (serS).